The sequence spans 405 residues: Transposase from transposon Tn916 (405 aa).

The 85-residue stretch at 79 to 163 (GKKMTLCQLY…SLKASFYIAI (85 aa)) folds into the Core-binding (CB) domain. The region spanning 186–392 (VPKTVLTEEQ…TFDSAMAEMK (207 aa)) is the Tyr recombinase domain. Catalysis depends on residues Arg225, Lys264, His343, Arg346, and His369. The active-site O-(3'-phospho-DNA)-tyrosine intermediate is Tyr379.

Belongs to the 'phage' integrase family.

The chain is Transposase from transposon Tn916 (Int-Tn) from Enterococcus faecalis (Streptococcus faecalis).